The chain runs to 690 residues: Protein AC23 (690 aa).

Residues M1–G37 form the signal peptide.

It is found in the virion. Its function is as follows. Pathogenicity factor that accelerates mortality in the host insect. In Autographa californica nuclear polyhedrosis virus (AcMNPV), this protein is Protein AC23.